The following is a 238-amino-acid chain: 15,16-dihydrobiliverdin:ferredoxin oxidoreductase (238 aa).

Belongs to the HY2 family.

It carries out the reaction 15,16-dihydrobiliverdin + oxidized 2[4Fe-4S]-[ferredoxin] = biliverdin IXalpha + reduced 2[4Fe-4S]-[ferredoxin] + 2 H(+). Catalyzes the two-electron reduction of biliverdin IX-alpha at the C15 methine bridge. The chain is 15,16-dihydrobiliverdin:ferredoxin oxidoreductase from Prochlorococcus marinus (strain NATL1A).